The chain runs to 269 residues: UPF0354 protein YtpQ (269 aa).

It belongs to the UPF0354 family.

The protein is UPF0354 protein YtpQ (ytpQ) of Bacillus subtilis (strain 168).